Reading from the N-terminus, the 256-residue chain is Small ribosomal subunit protein uS2 (256 aa).

Residues 229-256 (PVDDNGDYGDFDEAIDEYADETDASESE) form a disordered region. Positions 232–256 (DNGDYGDFDEAIDEYADETDASESE) are enriched in acidic residues.

The protein belongs to the universal ribosomal protein uS2 family.

In Picosynechococcus sp. (strain ATCC 27264 / PCC 7002 / PR-6) (Agmenellum quadruplicatum), this protein is Small ribosomal subunit protein uS2.